The chain runs to 332 residues: DNA-directed RNA polymerase subunit alpha (332 aa).

The interval 1 to 234 (MTVTANQVLR…DQLSVFGDFT (234 aa)) is alpha N-terminal domain (alpha-NTD). An alpha C-terminal domain (alpha-CTD) region spans residues 248–332 (VDPVLLRPID…AGVASHGMLG (85 aa)).

The protein belongs to the RNA polymerase alpha chain family. In terms of assembly, homodimer. The RNAP catalytic core consists of 2 alpha, 1 beta, 1 beta' and 1 omega subunit. When a sigma factor is associated with the core the holoenzyme is formed, which can initiate transcription.

The enzyme catalyses RNA(n) + a ribonucleoside 5'-triphosphate = RNA(n+1) + diphosphate. Its function is as follows. DNA-dependent RNA polymerase catalyzes the transcription of DNA into RNA using the four ribonucleoside triphosphates as substrates. In Stenotrophomonas maltophilia (strain K279a), this protein is DNA-directed RNA polymerase subunit alpha.